The primary structure comprises 576 residues: Ferroportin (576 aa).

Residues 1-23 (MPKAGEQARQGGCCGSLANYLTS) lie on the Cytoplasmic side of the membrane. The chain crosses the membrane as a helical span at residues 24-53 (AKFLLYLGHSLSTWGDRMWHFAVSVFLVEL). Fe cation contacts are provided by D39 and H43. Over 54–57 (YGNS) the chain is Extracellular. A helical transmembrane segment spans residues 58 to 84 (LLLTAVYGLVVAGSVLVLGAIIGDWVD). The Cytoplasmic segment spans residues 85-87 (KNA). The chain crosses the membrane as a helical span at residues 88-118 (RLKVAQTSLVVQNVSVILCGIILMMVFLHKN). The Extracellular portion of the chain corresponds to 119-126 (ELLTMYHG). The helical transmembrane segment at 127-162 (WVLTFCYILIITIADVANLASTATAITIQRDWIVVV) threads the bilayer. The Cytoplasmic segment spans residues 163–164 (AG). The chain crosses the membrane as a helical span at residues 165 to 195 (GDRSKLADMNATIRRIDQLTNILAPMAVGQI). Topologically, residues 196-202 (MTFGSAV) are extracellular. Residues 203 to 229 (IGCGFISGWNLVSMCVEYFLLWKVYQK) form a helical membrane-spanning segment. Over 230–306 (TPALAVKAAL…DGWVSYYNQS (77 aa)) the chain is Cytoplasmic. The chain crosses the membrane as a helical span at residues 307–333 (VFLAGMGLAFLYMTVLGFDCITTGYAY). Residue C326 coordinates Fe cation. Topologically, residues 334–338 (TQGLS) are extracellular. The helical transmembrane segment at 339–366 (GSILSILMGASAITGIMGTVAFTWLRRK) threads the bilayer. Residues 367-368 (CG) lie on the Cytoplasmic side of the membrane. A helical transmembrane segment spans residues 369–391 (LVRTGLISGFAQLSCLILCVISV). The Extracellular portion of the chain corresponds to 392–458 (FMPGSPLDLS…ETTPKSVPII (67 aa)). N439 is a glycosylation site (N-linked (GlcNAc...) asparagine). Residues 459–488 (SVSLLFAGVIAARIGLWSFDLTVTQLLQEN) form a helical membrane-spanning segment. Over 489-493 (VIESE) the chain is Cytoplasmic. The chain crosses the membrane as a helical span at residues 494-518 (RGIINGVQNSMNYLLDLLHFIMVIL). H512 contacts Fe cation. Residues 519–521 (APN) lie on the Extracellular side of the membrane. The helical transmembrane segment at 522 to 547 (PEAFGLLVLISVSFVAMGHIMYFRFA) threads the bilayer. Residues 548–576 (QKTLGSKLFACGADDEEVTNENQANTSVV) lie on the Cytoplasmic side of the membrane.

Belongs to the ferroportin (FP) (TC 2.A.100) family. SLC40A subfamily. As to quaternary structure, identified in a complex with STOM. Interacts with HAMP; affinity of the peptide hormone HAMP for SLC40A1 increases by 80-fold in the presence of iron and the interaction promotes SLC40A1 ubiquitination and degradation. Part of a complex composed of SLC40A1/ferroportin, TF/transferrin and HEPH/hephaestin that transfers iron from cells to transferrin. In terms of processing, polyubiquitinated by RNF217; leading to proteasomal degradation. Under conditions of high systemic iron levels, both the hormone peptide hepcidin/HAMP and holo(iron bound)-transferrin/TF induce the ubiquitination, internalization and proteasomal degradation of SLC40A1 to control iron release from cells.

It is found in the cell membrane. The protein localises to the basolateral cell membrane. The enzyme catalyses Fe(2+)(in) = Fe(2+)(out). With respect to regulation, during elevated serum iron levels, liver-derived hepcidin/HAMP negatively regulates cell surface ferroportin/SLC40A1 by inducing its ubiquitination, internalization, and degradation. Indeed, hepcidin/HAMP affinity towards ferroportin/SLC40A1 increases by 80-fold in the presence of iron. Functionally, transports Fe(2+) from the inside of a cell to the outside of the cell, playing a key role for maintaining systemic iron homeostasis. Transports iron from intestinal, splenic, hepatic cells, macrophages and erythrocytes into the blood to provide iron to other tissues. Controls therefore dietary iron uptake, iron recycling by macrophages and erythrocytes, and release of iron stores in hepatocytes. When iron is in excess in serum, circulating HAMP/hepcidin levels increase resulting in a degradation of SLC40A1, thus limiting the iron efflux to plasma. This is Ferroportin from Canis lupus familiaris (Dog).